Here is a 225-residue protein sequence, read N- to C-terminus: Protein-L-isoaspartate O-methyltransferase (225 aa).

Residues 57–60 (ATVS), histidine 65, serine 89, 110–111 (EH), 142–143 (DG), threonine 216, and glutamine 221 each bind S-adenosyl-L-homocysteine. Serine 60 is a catalytic residue.

The protein belongs to the methyltransferase superfamily. L-isoaspartyl/D-aspartyl protein methyltransferase family. As to quaternary structure, monomer.

Its subcellular location is the cytoplasm. The protein resides in the cytosol. It carries out the reaction [protein]-L-isoaspartate + S-adenosyl-L-methionine = [protein]-L-isoaspartate alpha-methyl ester + S-adenosyl-L-homocysteine. Initiates the repair of damaged proteins by catalyzing methyl esterification of L-isoaspartyl and D-aspartyl residues produced by spontaneous isomerization and racemization of L-aspartyl and L-asparaginyl residues in aging peptides and proteins. The chain is Protein-L-isoaspartate O-methyltransferase (pcm-1) from Caenorhabditis elegans.